We begin with the raw amino-acid sequence, 58 residues long: Large ribosomal subunit protein eL37 (58 aa).

4 residues coordinate Zn(2+): cysteine 20, cysteine 23, cysteine 35, and cysteine 38. The C4-type zinc-finger motif lies at 20–38 (CRRCGEKSYHTKKKVCSSC).

This sequence belongs to the eukaryotic ribosomal protein eL37 family. The cofactor is Zn(2+).

Functionally, binds to the 23S rRNA. In Haloquadratum walsbyi (strain DSM 16790 / HBSQ001), this protein is Large ribosomal subunit protein eL37.